The chain runs to 234 residues: LRP chaperone MESD (234 aa).

The first 33 residues, 1–33 (MAASRWARKAVVLLCASDLLLLLLLLPPPGSCA), serve as a signal peptide directing secretion. Residues 1-164 (MAASRWARKA…DRAIFMLRDG (164 aa)) are chaperone domain. Disordered regions lie at residues 31–95 (SCAA…DFSK) and 187–234 (GQVY…REDL). Residues 54–70 (DIRDYNDADMARLLEQW) show a composition bias toward basic and acidic residues. Residues 71 to 80 (EKDDDIEEGD) show a composition bias toward acidic residues. Residues 165–204 (SYAWEIKDFLVGQDRCADVTLEGQVYPGKGGGSKEKNKTK) form an escort domain region. Over residues 196-234 (GSKEKNKTKQDKGKKKKEGDLKSRSSKEENRAGNKREDL) the composition is skewed to basic and acidic residues. N-linked (GlcNAc...) asparagine glycosylation occurs at asparagine 201. Residues 231 to 234 (REDL) carry the Prevents secretion from ER motif.

The protein belongs to the MESD family. In terms of assembly, monomer. Interacts with LRP5; the interaction prevents LRP5 from forming aggregates and chaperones LRP6 to the plasma membrane. Interacts with LRP6; the interaction prevents LRP6 from forming aggregates and chaperones LRP6 to the plasma membrane. Interacts with LRP4; the interaction promotes glycosylation of LRP4 and its cell-surface expression.

Its subcellular location is the endoplasmic reticulum. Its function is as follows. Chaperone specifically assisting the folding of beta-propeller/EGF modules within the family of low-density lipoprotein receptors (LDLRs). Acts as a modulator of the Wnt pathway through chaperoning the coreceptors of the canonical Wnt pathway, LRP5 and LRP6, to the plasma membrane. Essential for specification of embryonic polarity and mesoderm induction. Plays an essential role in neuromuscular junction (NMJ) formation by promoting cell-surface expression of LRP4. May regulate phagocytosis of apoptotic retinal pigment epithelium (RPE) cells. The protein is LRP chaperone MESD of Homo sapiens (Human).